We begin with the raw amino-acid sequence, 274 residues long: STVLLFSSILLMLKNNLNNEINESFTSMIIMSALLLKSGAAPFHFWFPNMMEGLTWMNALMLMTWQKIAPLMLISYLNIKYLLLISVILSVIIGAIGGLNQTSLRKLMAFSSINHLGWMLSSLMFSESIWLIYFFFYSFLSFVLTFMFNIFKLFHLNQLFSWFVNSKILKFTLFMNFLSLGGLPPFLGFLPKWLVIQQLTLCNQYFLLTLMMMSTLITLFFYLRICYSAFMMNYFENNWIMKMNMISNNTNMYLIMTFFSIFGLFMISLFYFMF.

The next 8 membrane-spanning stretches (helical) occupy residues 28–48 (MIIMSALLLKSGAAPFHFWFP), 54–74 (LTWMNALMLMTWQKIAPLMLI), 79–99 (IKYLLLISVILSVIIGAIGGL), 107–127 (LMAFSSINHLGWMLSSLMFSE), 128–148 (SIWLIYFFFYSFLSFVLTFMF), 171–191 (FTLFMNFLSLGGLPPFLGFLP), 206–226 (FLLTLMMMSTLITLFFYLRIC), and 254–274 (LIMTFFSIFGLFMISLFYFMF).

The protein belongs to the complex I subunit 2 family.

It is found in the mitochondrion inner membrane. The catalysed reaction is a ubiquinone + NADH + 5 H(+)(in) = a ubiquinol + NAD(+) + 4 H(+)(out). Functionally, core subunit of the mitochondrial membrane respiratory chain NADH dehydrogenase (Complex I) that is believed to belong to the minimal assembly required for catalysis. Complex I functions in the transfer of electrons from NADH to the respiratory chain. The immediate electron acceptor for the enzyme is believed to be ubiquinone. The polypeptide is NADH-ubiquinone oxidoreductase chain 2 (mt:ND2) (Drosophila sechellia (Fruit fly)).